The primary structure comprises 936 residues: Translation initiation factor IF-2 (936 aa).

The tract at residues 102–332 (PEPGPVLKKD…SGSRQKFRKM (231 aa)) is disordered. Basic and acidic residues predominate over residues 108-119 (LKKDHVHEEPEK). Residues 127–137 (SEPEVEPEVEP) show a composition bias toward acidic residues. Residues 151 to 160 (PTEAVSVPEP) are compositionally biased toward low complexity. Positions 182 to 194 (QSSTMKAQASPEM) are enriched in polar residues. Composition is skewed to basic and acidic residues over residues 217–227 (SALDRGSESDR) and 237–267 (KEQADELKGEFENAGKAEGDKKPAKSGEAKT). Positions 272 to 281 (KAAGTTGSAA) are enriched in low complexity. A compositionally biased stretch (basic residues) spans 287 to 297 (SKKKKGGKKKK). The tr-type G domain occupies 433–603 (IRPPVVTIMG…LMEAEIRELK (171 aa)). A G1 region spans residues 442–449 (GHVDHGKT). GTP is bound at residue 442–449 (GHVDHGKT). The G2 stretch occupies residues 467–471 (GITQH). The tract at residues 489–492 (DTPG) is G3. Residues 489 to 493 (DTPGH) and 543 to 546 (NKID) contribute to the GTP site. Residues 543–546 (NKID) form a G4 region. The G5 stretch occupies residues 579–581 (SAK).

It belongs to the TRAFAC class translation factor GTPase superfamily. Classic translation factor GTPase family. IF-2 subfamily.

It is found in the cytoplasm. Functionally, one of the essential components for the initiation of protein synthesis. Protects formylmethionyl-tRNA from spontaneous hydrolysis and promotes its binding to the 30S ribosomal subunits. Also involved in the hydrolysis of GTP during the formation of the 70S ribosomal complex. The polypeptide is Translation initiation factor IF-2 (Prosthecochloris aestuarii (strain DSM 271 / SK 413)).